Here is a 238-residue protein sequence, read N- to C-terminus: Demethylmenaquinone methyltransferase (238 aa).

S-adenosyl-L-methionine-binding positions include T65, D85, and 109–110 (DA).

It belongs to the class I-like SAM-binding methyltransferase superfamily. MenG/UbiE family.

It catalyses the reaction a 2-demethylmenaquinol + S-adenosyl-L-methionine = a menaquinol + S-adenosyl-L-homocysteine + H(+). Its pathway is quinol/quinone metabolism; menaquinone biosynthesis; menaquinol from 1,4-dihydroxy-2-naphthoate: step 2/2. Its function is as follows. Methyltransferase required for the conversion of demethylmenaquinol (DMKH2) to menaquinol (MKH2). The protein is Demethylmenaquinone methyltransferase of Roseiflexus castenholzii (strain DSM 13941 / HLO8).